Here is a 590-residue protein sequence, read N- to C-terminus: Aspartate--tRNA ligase (590 aa).

Glu-172 lines the L-aspartate pocket. Positions 196–199 are aspartate; the sequence is QLFK. Arg-218 serves as a coordination point for L-aspartate. ATP-binding positions include 218–220 and Gln-227; that span reads RDE. Position 449 (His-449) interacts with L-aspartate. Glu-483 serves as a coordination point for ATP. Arg-490 is a binding site for L-aspartate. 535–538 provides a ligand contact to ATP; the sequence is GLDR.

This sequence belongs to the class-II aminoacyl-tRNA synthetase family. Type 1 subfamily. As to quaternary structure, homodimer.

It is found in the cytoplasm. The catalysed reaction is tRNA(Asp) + L-aspartate + ATP = L-aspartyl-tRNA(Asp) + AMP + diphosphate. Catalyzes the attachment of L-aspartate to tRNA(Asp) in a two-step reaction: L-aspartate is first activated by ATP to form Asp-AMP and then transferred to the acceptor end of tRNA(Asp). In Mannheimia succiniciproducens (strain KCTC 0769BP / MBEL55E), this protein is Aspartate--tRNA ligase.